The following is a 283-amino-acid chain: Heavy metal-associated isoprenylated plant protein 3 (283 aa).

The span at 1 to 22 shows a compositional bias: basic and acidic residues; sequence MGEKKNEGDNKKKGGDNKKKNE. Residues 1-26 are disordered; sequence MGEKKNEGDNKKKGGDNKKKNETPSI. HMA domains lie at 25 to 88 and 132 to 195; these read SITV…KKKV and VTTA…KRAV. Zn(2+) contacts are provided by cysteine 36 and cysteine 39. Positions 82–129 are enriched in basic and acidic residues; it reads EKTKKKVDLVSPQPKKEKEKENKNKNDEDKKKSEEKKKPDNNDKKPKE. Residues 82-131 form a disordered region; the sequence is EKTKKKVDLVSPQPKKEKEKENKNKNDEDKKKSEEKKKPDNNDKKPKETP. Cysteine 143 and cysteine 146 together coordinate Zn(2+). The span at 198-230 shows a compositional bias: basic and acidic residues; the sequence is VPPKKEKDKENGNENGEKKKGGGGDGGGKEKTG. Residues 198–238 form a disordered region; the sequence is VPPKKEKDKENGNENGEKKKGGGGDGGGKEKTGNKGGGEGV. Cysteine 280 is subject to Cysteine methyl ester. Cysteine 280 carries S-farnesyl cysteine lipidation. Positions 281–283 are cleaved as a propeptide — removed in mature form; sequence VVM.

Belongs to the HIPP family.

The protein resides in the nucleus. Its subcellular location is the nucleolus. The protein localises to the cytoplasm. In terms of biological role, heavy-metal-binding protein. Binds high amounts of zinc. May act as an upstream regulator of the salicylate-dependent pathogen response. Involved in abiotic stress responses, and seed and flower development. This Arabidopsis thaliana (Mouse-ear cress) protein is Heavy metal-associated isoprenylated plant protein 3.